Reading from the N-terminus, the 303-residue chain is Putative fimbrium subunit Fim1C (303 aa).

The first 22 residues, Met-1–Asp-22, serve as a signal peptide directing secretion.

It belongs to the bacteroidetes fimbrillin superfamily. Mfa-like family. As to quaternary structure, may be part of the fimbrial tip.

It is found in the fimbrium. In terms of biological role, putative component of the fimbrium tip. Fimbriae are filamentous appendages on the cell surface that mediate cell adhesion and biofilm formation. This chain is Putative fimbrium subunit Fim1C (fim1C), found in Bacteroides uniformis (strain ATCC 8492 / DSM 6597 / CCUG 4942 / CIP 103695 / JCM 5828 / KCTC 5204 / NCTC 13054 / VPI 0061).